A 317-amino-acid polypeptide reads, in one-letter code: Small ribosomal subunit protein RACK1 (317 aa).

WD repeat units follow at residues Gly13–Lys44, Gly61–Asp91, Gly103–Asn133, Gly146–Asn178, Gly190–Asp220, Asp231–Asp260, and Ala281–Gln311.

It belongs to the WD repeat G protein beta family. Ribosomal protein RACK1 subfamily.

The protein localises to the cytoplasm. Functionally, involved in the recruitment, assembly and/or regulation of a variety of signaling molecules. Interacts with a wide variety of proteins and plays a role in many cellular processes. Required for VANGL2 membrane localization, inhibits Wnt signaling and regulates cellular polarization and oriented cell division during gastrulation. The sequence is that of Small ribosomal subunit protein RACK1 (gnb2l1) from Oreochromis niloticus (Nile tilapia).